A 342-amino-acid chain; its full sequence is S-adenosylmethionine:tRNA ribosyltransferase-isomerase (342 aa).

The protein belongs to the QueA family. Monomer.

It is found in the cytoplasm. The catalysed reaction is 7-aminomethyl-7-carbaguanosine(34) in tRNA + S-adenosyl-L-methionine = epoxyqueuosine(34) in tRNA + adenine + L-methionine + 2 H(+). It participates in tRNA modification; tRNA-queuosine biosynthesis. In terms of biological role, transfers and isomerizes the ribose moiety from AdoMet to the 7-aminomethyl group of 7-deazaguanine (preQ1-tRNA) to give epoxyqueuosine (oQ-tRNA). The sequence is that of S-adenosylmethionine:tRNA ribosyltransferase-isomerase from Listeria innocua serovar 6a (strain ATCC BAA-680 / CLIP 11262).